Reading from the N-terminus, the 93-residue chain is Pyrimidine/purine nucleoside phosphorylase (93 aa).

It belongs to the nucleoside phosphorylase PpnP family.

The enzyme catalyses a purine D-ribonucleoside + phosphate = a purine nucleobase + alpha-D-ribose 1-phosphate. It carries out the reaction adenosine + phosphate = alpha-D-ribose 1-phosphate + adenine. It catalyses the reaction cytidine + phosphate = cytosine + alpha-D-ribose 1-phosphate. The catalysed reaction is guanosine + phosphate = alpha-D-ribose 1-phosphate + guanine. The enzyme catalyses inosine + phosphate = alpha-D-ribose 1-phosphate + hypoxanthine. It carries out the reaction thymidine + phosphate = 2-deoxy-alpha-D-ribose 1-phosphate + thymine. It catalyses the reaction uridine + phosphate = alpha-D-ribose 1-phosphate + uracil. The catalysed reaction is xanthosine + phosphate = alpha-D-ribose 1-phosphate + xanthine. Functionally, catalyzes the phosphorolysis of diverse nucleosides, yielding D-ribose 1-phosphate and the respective free bases. Can use uridine, adenosine, guanosine, cytidine, thymidine, inosine and xanthosine as substrates. Also catalyzes the reverse reactions. This is Pyrimidine/purine nucleoside phosphorylase from Shewanella halifaxensis (strain HAW-EB4).